A 356-amino-acid polypeptide reads, in one-letter code: Histidinol-phosphate aminotransferase (356 aa).

At lysine 214 the chain carries N6-(pyridoxal phosphate)lysine.

This sequence belongs to the class-II pyridoxal-phosphate-dependent aminotransferase family. Histidinol-phosphate aminotransferase subfamily. In terms of assembly, homodimer. Pyridoxal 5'-phosphate is required as a cofactor.

It carries out the reaction L-histidinol phosphate + 2-oxoglutarate = 3-(imidazol-4-yl)-2-oxopropyl phosphate + L-glutamate. It participates in amino-acid biosynthesis; L-histidine biosynthesis; L-histidine from 5-phospho-alpha-D-ribose 1-diphosphate: step 7/9. The protein is Histidinol-phosphate aminotransferase of Escherichia coli O6:K15:H31 (strain 536 / UPEC).